Consider the following 289-residue polypeptide: Acetyl-coenzyme A carboxylase carboxyl transferase subunit beta (289 aa).

The CoA carboxyltransferase N-terminal domain maps to 34 to 289; the sequence is MWVKCNKCGE…KLINMHQNSF (256 aa). Positions 38, 41, 57, and 60 each coordinate Zn(2+). The C4-type zinc finger occupies 38 to 60; it reads CNKCGEILYQNDLEKNYMVCNLC.

This sequence belongs to the AccD/PCCB family. Acetyl-CoA carboxylase is a heterohexamer composed of biotin carboxyl carrier protein (AccB), biotin carboxylase (AccC) and two subunits each of ACCase subunit alpha (AccA) and ACCase subunit beta (AccD). Requires Zn(2+) as cofactor.

It is found in the cytoplasm. The catalysed reaction is N(6)-carboxybiotinyl-L-lysyl-[protein] + acetyl-CoA = N(6)-biotinyl-L-lysyl-[protein] + malonyl-CoA. It participates in lipid metabolism; malonyl-CoA biosynthesis; malonyl-CoA from acetyl-CoA: step 1/1. In terms of biological role, component of the acetyl coenzyme A carboxylase (ACC) complex. Biotin carboxylase (BC) catalyzes the carboxylation of biotin on its carrier protein (BCCP) and then the CO(2) group is transferred by the transcarboxylase to acetyl-CoA to form malonyl-CoA. This chain is Acetyl-coenzyme A carboxylase carboxyl transferase subunit beta, found in Clostridium botulinum (strain Okra / Type B1).